The chain runs to 314 residues: Cytochrome c biogenesis protein CcsA (314 aa).

The next 8 helical transmembrane spans lie at 15–35 (VSFI…ISLI), 48–68 (LITI…WIIS), 73–93 (ISNL…GQLL), 102–122 (IIPA…CFVL), 148–168 (VMLS…VLFI), 216–236 (SILV…IWAN), 250–267 (TWAF…HMRI), and 277–297 (ALLA…VNFL).

Belongs to the CcmF/CycK/Ccl1/NrfE/CcsA family. May interact with ccs1.

The protein localises to the cellular thylakoid membrane. Its function is as follows. Required during biogenesis of c-type cytochromes (cytochrome c6 and cytochrome f) at the step of heme attachment. The chain is Cytochrome c biogenesis protein CcsA from Prochlorococcus marinus subsp. pastoris (strain CCMP1986 / NIES-2087 / MED4).